Reading from the N-terminus, the 1008-residue chain is DNA polymerase catalytic subunit (1008 aa).

The protein belongs to the DNA polymerase type-B family.

Its subcellular location is the host nucleus. The catalysed reaction is DNA(n) + a 2'-deoxyribonucleoside 5'-triphosphate = DNA(n+1) + diphosphate. In Equine herpesvirus 2 (strain 86/87) (EHV-2), this protein is DNA polymerase catalytic subunit (9).